The primary structure comprises 352 residues: Photosystem II D2 protein (352 aa).

The chain crosses the membrane as a helical span at residues 40 to 60 (CAFMALGGWLTGTTFVTSWYT). H117 is a binding site for chlorophyll a. The chain crosses the membrane as a helical span at residues 124 to 140 (GFMLRQFEIARLVGIRP). Pheophytin a-binding residues include Q129 and N142. The chain crosses the membrane as a helical span at residues 152-165 (VFVSVFLMYPLGQS). H197 lines the chlorophyll a pocket. A helical membrane pass occupies residues 207–227 (GALLCAIHGATVENTLFEDSD). A plastoquinone contacts are provided by H214 and F261. Residue H214 coordinates Fe cation. H268 is a Fe cation binding site. Residues 278-294 (GLWMSSVGIVGLALNLR) form a helical membrane-spanning segment.

This sequence belongs to the reaction center PufL/M/PsbA/D family. As to quaternary structure, PSII is composed of 1 copy each of membrane proteins PsbA, PsbB, PsbC, PsbD, PsbE, PsbF, PsbH, PsbI, PsbJ, PsbK, PsbL, PsbM, PsbT, PsbX, PsbY, PsbZ, Psb30/Ycf12, peripheral proteins PsbO, CyanoQ (PsbQ), PsbU, PsbV and a large number of cofactors. It forms dimeric complexes. The D1/D2 heterodimer binds P680, chlorophylls that are the primary electron donor of PSII, and subsequent electron acceptors. It shares a non-heme iron and each subunit binds pheophytin, quinone, additional chlorophylls, carotenoids and lipids. There is also a Cl(-1) ion associated with D1 and D2, which is required for oxygen evolution. The PSII complex binds additional chlorophylls, carotenoids and specific lipids. is required as a cofactor.

The protein resides in the cellular thylakoid membrane. The catalysed reaction is 2 a plastoquinone + 4 hnu + 2 H2O = 2 a plastoquinol + O2. Photosystem II (PSII) is a light-driven water:plastoquinone oxidoreductase that uses light energy to abstract electrons from H(2)O, generating O(2) and a proton gradient subsequently used for ATP formation. It consists of a core antenna complex that captures photons, and an electron transfer chain that converts photonic excitation into a charge separation. The D1/D2 (PsbA/PsbD) reaction center heterodimer binds P680, the primary electron donor of PSII as well as several subsequent electron acceptors. D2 is needed for assembly of a stable PSII complex. This Picosynechococcus sp. (strain ATCC 27264 / PCC 7002 / PR-6) (Agmenellum quadruplicatum) protein is Photosystem II D2 protein.